Here is a 66-residue protein sequence, read N- to C-terminus: ATP synthase protein 8 (66 aa).

A helical transmembrane segment spans residues 8–24 (TWLMMIMSMFLALFIIF). N6-acetyllysine; alternate is present on Lys54. Lys54 carries the N6-succinyllysine; alternate modification. The residue at position 57 (Lys57) is an N6-acetyllysine.

Belongs to the ATPase protein 8 family. In terms of assembly, F-type ATPases have 2 components, CF(1) - the catalytic core - and CF(0) - the membrane proton channel. Component of an ATP synthase complex composed of ATP5PB, ATP5MC1, ATP5F1E, ATP5PD, ATP5ME, ATP5PF, ATP5MF, MT-ATP6, MT-ATP8, ATP5F1A, ATP5F1B, ATP5F1D, ATP5F1C, ATP5PO, ATP5MG, ATP5MK and ATP5MJ. Interacts with PRICKLE3.

Its subcellular location is the mitochondrion membrane. In terms of biological role, mitochondrial membrane ATP synthase (F(1)F(0) ATP synthase or Complex V) produces ATP from ADP in the presence of a proton gradient across the membrane which is generated by electron transport complexes of the respiratory chain. F-type ATPases consist of two structural domains, F(1) - containing the extramembraneous catalytic core and F(0) - containing the membrane proton channel, linked together by a central stalk and a peripheral stalk. During catalysis, ATP synthesis in the catalytic domain of F(1) is coupled via a rotary mechanism of the central stalk subunits to proton translocation. Part of the complex F(0) domain. Minor subunit located with subunit a in the membrane. In Cervus elaphus hippelaphus (European red deer), this protein is ATP synthase protein 8 (MT-ATP8).